Reading from the N-terminus, the 517-residue chain is Nucleoside transporter FUN26 (517 aa).

A disordered region spans residues 1 to 63 (MSTSADTDTI…EREQSVSTEP (63 aa)). Over residues 25–44 (THSEEISRSGEEHESENNEH) the composition is skewed to basic and acidic residues. A phosphoserine mark is found at Ser45 and Ser58. 11 helical membrane-spanning segments follow: residues 76–96 (LSYI…NCIL), 116–136 (IFTS…NIYL), 151–171 (LVWE…HFLL), 174–194 (WFNF…TAMT), 214–234 (MVGQ…LAFI), 243–263 (GGIL…VVMF), 344–364 (LVLS…FASA), 367–387 (VTGL…LWNL), 411–431 (TFIY…FTAI), 446–466 (IVDL…GHVI), and 492–512 (IFVS…VFII).

Belongs to the SLC29A/ENT transporter (TC 2.A.57) family.

The protein resides in the membrane. Has broad nucleoside selectivity (uridine, adenosine and cytidine) and most likely functions to transport nucleosides across intracellular membranes. The protein is Nucleoside transporter FUN26 (FUN26) of Saccharomyces cerevisiae (strain ATCC 204508 / S288c) (Baker's yeast).